We begin with the raw amino-acid sequence, 205 residues long: Thymidylate kinase (205 aa).

An ATP-binding site is contributed by 11–18 (GPEGSGKT).

The protein belongs to the thymidylate kinase family.

The enzyme catalyses dTMP + ATP = dTDP + ADP. In terms of biological role, phosphorylation of dTMP to form dTDP in both de novo and salvage pathways of dTTP synthesis. In Clostridium novyi (strain NT), this protein is Thymidylate kinase.